A 522-amino-acid polypeptide reads, in one-letter code: Coiled-coil domain-containing protein 149-B (522 aa).

Coiled-coil stretches lie at residues methionine 1 to lysine 196 and isoleucine 260 to serine 287. The tract at residues alanine 413–serine 522 is disordered. Polar residues-rich tracts occupy residues glycine 429 to alanine 438, glutamine 467 to glutamine 490, and alanine 503 to serine 522.

The protein belongs to the CCDC149 family.

This Danio rerio (Zebrafish) protein is Coiled-coil domain-containing protein 149-B (ccdc149b).